The following is a 92-amino-acid chain: Acylphosphatase (92 aa).

The Acylphosphatase-like domain maps to 5–92 (GVTIYVYGRV…EDIADFIVRH (88 aa)). Active-site residues include Arg20 and Asn38.

This sequence belongs to the acylphosphatase family.

It carries out the reaction an acyl phosphate + H2O = a carboxylate + phosphate + H(+). The chain is Acylphosphatase (acyP) from Photorhabdus laumondii subsp. laumondii (strain DSM 15139 / CIP 105565 / TT01) (Photorhabdus luminescens subsp. laumondii).